The chain runs to 331 residues: MGFGDFDTICQKAALPLCSLVGPASSISGATGIIPNCYARNIELANTIIFEGAASFVHIIALAMTVIMILHIRSKFTAVGRKEIITFFYIYMLLTMCSLVIDAGVVPPRSGPFPYFVAVQNGLTSALCTSLLVNGFVGFQLYEDGTALSVWLLRLTSTAMFAISFVISLLTFKSWGGLSPTNTVGMFVVLYILNAICIAVYLIMQLLLVMNTLEDRWPLGHIAFGLLVFICGQVLLYAFSDTICENVQHYLDGLFFTTICNLLAVMMVYKFWDYITKEDLEFSVGIKPNTWEVKEFLPEEDRRATVYQDTNSEYAGSMYHHRASAYNNHNY.

Transmembrane regions (helical) follow at residues glycine 52 to isoleucine 72, isoleucine 84 to glycine 104, glycine 122 to tyrosine 142, valine 150 to leucine 170, valine 184 to methionine 204, leucine 219 to phenylalanine 239, and histidine 249 to tyrosine 269.

The protein belongs to the CHS7 family. In terms of assembly, interacts with chs3.

Its subcellular location is the endoplasmic reticulum membrane. Its function is as follows. Chaperone required for the export of the chitin synthase chs3 from the endoplasmic reticulum. In Aspergillus oryzae (strain ATCC 42149 / RIB 40) (Yellow koji mold), this protein is Chitin synthase export chaperone (chs7).